Reading from the N-terminus, the 268-residue chain is Probable ribosomal RNA small subunit methyltransferase A (268 aa).

Residues H23, L25, G50, E71, D95, and N110 each coordinate S-adenosyl-L-methionine.

The protein belongs to the class I-like SAM-binding methyltransferase superfamily. rRNA adenine N(6)-methyltransferase family. RsmA subfamily.

It localises to the cytoplasm. Specifically dimethylates two adjacent adenosines in the loop of a conserved hairpin near the 3'-end of 16S rRNA in the 30S particle. May play a critical role in biogenesis of 30S subunits. This chain is Probable ribosomal RNA small subunit methyltransferase A, found in Pyrococcus horikoshii (strain ATCC 700860 / DSM 12428 / JCM 9974 / NBRC 100139 / OT-3).